Here is a 56-residue protein sequence, read N- to C-terminus: Aspartyl-phosphate phosphatase YisI (56 aa).

This sequence belongs to the spo0E family.

Functionally, aspartyl-phosphate phosphatase which specifically dephosphorylates the sporulation transcription factor Spo0A-P and negatively regulates the sporulation initiation pathway in order to control the proper timing of sporulation. The sequence is that of Aspartyl-phosphate phosphatase YisI (yisI) from Bacillus subtilis (strain 168).